The sequence spans 86 residues: Small ribosomal subunit protein bS16 (86 aa).

Belongs to the bacterial ribosomal protein bS16 family.

In Methylibium petroleiphilum (strain ATCC BAA-1232 / LMG 22953 / PM1), this protein is Small ribosomal subunit protein bS16.